Reading from the N-terminus, the 431-residue chain is Growth-regulating factor 9 (431 aa).

The QLQ domain maps to 24–59 (WMKAAQLMEFRMQALVYRYIEAGLRVPHHLVVPIWN). WRC domains are found at residues 89–133 (ETEP…LVES) and 307–351 (DNEP…VDTT). 4 consecutive short sequence motifs (bipartite nuclear localization signal) follow at residues 94 to 104 (RCRRTDGKKWR), 122 to 129 (RGRKRSRK), 312 to 322 (RCRRTDGKKWR), and 340 to 345 (RGMKKK).

This sequence belongs to the GRF family. In terms of assembly, interacts with GIF1. In terms of tissue distribution, detected in the shoot apical meristem (SAM) and in young leaf primordium.

The protein localises to the nucleus. Its function is as follows. Transcription activator that plays a role in the regulation of cell expansion in leaf and cotyledons tissues. Component of a network formed by miR396, the GRFs and their interacting factors (GIFs) acting in the regulation of meristem function, at least partially through the control of cell proliferation. This Arabidopsis thaliana (Mouse-ear cress) protein is Growth-regulating factor 9 (GRF9).